A 552-amino-acid polypeptide reads, in one-letter code: MAGUK p55 subfamily member 2 (552 aa).

L27 domains lie at 8–59 (SESA…EETK) and 60–118 (LEAV…YETP). At S42 the chain carries Phosphoserine. T117 is modified (phosphothreonine). S121 is subject to Phosphoserine. The region spanning 140–219 (MVGIRKTAGE…SVILKILPSY (80 aa)) is the PDZ domain. The 69-residue stretch at 225–293 (PRQVFVKCHF…PSQLLEEKRK (69 aa)) folds into the SH3 domain. The 188-residue stretch at 350 to 537 (RKTLVLIGAQ…TFRELQTAME (188 aa)) folds into the Guanylate kinase-like domain.

It belongs to the MAGUK family. In terms of assembly, can homomultimerise. Interacts with CACNG2. Interacts (via the SH3-Guanylate kinase-like sub-module) with DLG4/PSD95 and DLGAP1/GKAP. Interacts (via the PDZ domain) with CADM1 (via C-terminus). Interacts with KCNN2/SK2 (via N-terminal domain). Interacts with SRC. In terms of processing, phosphorylated by SRC. As to expression, expressed in hippocampal neurons.

It is found in the cell projection. It localises to the dendrite. Its subcellular location is the postsynaptic density. The protein localises to the cytoplasm. The protein resides in the cytoskeleton. It is found in the membrane. Its function is as follows. Postsynaptic MAGUK scaffold protein that links CADM1 cell adhesion molecules to core components of the postsynaptic density. In CA1 pyramidal neurons, required for synaptic KCNN2-containing channel function and long-term potentiation expression. Seems to negatively regulate SRC function in epithelial cells. The polypeptide is MAGUK p55 subfamily member 2 (Rattus norvegicus (Rat)).